Here is a 724-residue protein sequence, read N- to C-terminus: Putative methyltransferase NSUN7 (724 aa).

The active-site Nucleophile is the Cys-444. 3 disordered regions span residues 542–574, 595–629, and 698–724; these read KTLK…LAVD, ISTS…TPLV, and TSST…RPWL. Residues 543 to 554 show a composition bias toward basic residues; it reads TLKRDKKRKKSK. Positions 562–572 are enriched in basic and acidic residues; the sequence is HHGDPLRDHLA. The span at 595-618 shows a compositional bias: polar residues; sequence ISTSTKMSAPAKTVSQAGTSSQVR.

The protein belongs to the class I-like SAM-binding methyltransferase superfamily. RsmB/NOP family. As to expression, expressed in testis.

In terms of biological role, may have S-adenosyl-L-methionine-dependent methyl-transferase activity. In Mus musculus (Mouse), this protein is Putative methyltransferase NSUN7 (Nsun7).